The chain runs to 374 residues: UPF0754 membrane protein SAB1779c (374 aa).

Helical transmembrane passes span 4–24 (LFII…TNVI) and 354–374 (SLGF…AIFV).

Belongs to the UPF0754 family.

The protein localises to the cell membrane. This is UPF0754 membrane protein SAB1779c from Staphylococcus aureus (strain bovine RF122 / ET3-1).